Consider the following 248-residue polypeptide: tRNA (guanine-N(1)-)-methyltransferase (248 aa).

Residues Gly113 and Ile133–Leu138 each bind S-adenosyl-L-methionine.

It belongs to the RNA methyltransferase TrmD family. Homodimer.

It is found in the cytoplasm. The enzyme catalyses guanosine(37) in tRNA + S-adenosyl-L-methionine = N(1)-methylguanosine(37) in tRNA + S-adenosyl-L-homocysteine + H(+). Functionally, specifically methylates guanosine-37 in various tRNAs. This is tRNA (guanine-N(1)-)-methyltransferase from Shewanella denitrificans (strain OS217 / ATCC BAA-1090 / DSM 15013).